The primary structure comprises 328 residues: N-acetyl-gamma-glutamyl-phosphate reductase (328 aa).

Residue cysteine 143 is part of the active site.

It belongs to the NAGSA dehydrogenase family. Type 1 subfamily.

The protein localises to the cytoplasm. The catalysed reaction is N-acetyl-L-glutamate 5-semialdehyde + phosphate + NADP(+) = N-acetyl-L-glutamyl 5-phosphate + NADPH + H(+). The protein operates within amino-acid biosynthesis; L-arginine biosynthesis; N(2)-acetyl-L-ornithine from L-glutamate: step 3/4. In terms of biological role, catalyzes the NADPH-dependent reduction of N-acetyl-5-glutamyl phosphate to yield N-acetyl-L-glutamate 5-semialdehyde. In Methanoregula boonei (strain DSM 21154 / JCM 14090 / 6A8), this protein is N-acetyl-gamma-glutamyl-phosphate reductase.